The primary structure comprises 258 residues: Imidazole glycerol phosphate synthase subunit HisF (258 aa).

Catalysis depends on residues aspartate 11 and aspartate 130.

This sequence belongs to the HisA/HisF family. As to quaternary structure, heterodimer of HisH and HisF.

It localises to the cytoplasm. The catalysed reaction is 5-[(5-phospho-1-deoxy-D-ribulos-1-ylimino)methylamino]-1-(5-phospho-beta-D-ribosyl)imidazole-4-carboxamide + L-glutamine = D-erythro-1-(imidazol-4-yl)glycerol 3-phosphate + 5-amino-1-(5-phospho-beta-D-ribosyl)imidazole-4-carboxamide + L-glutamate + H(+). It participates in amino-acid biosynthesis; L-histidine biosynthesis; L-histidine from 5-phospho-alpha-D-ribose 1-diphosphate: step 5/9. Functionally, IGPS catalyzes the conversion of PRFAR and glutamine to IGP, AICAR and glutamate. The HisF subunit catalyzes the cyclization activity that produces IGP and AICAR from PRFAR using the ammonia provided by the HisH subunit. The sequence is that of Imidazole glycerol phosphate synthase subunit HisF from Blochmanniella floridana.